A 215-amino-acid polypeptide reads, in one-letter code: Putative serine/threonine-protein kinase YrzF (215 aa).

Residues 27–215 (SEELTLIGKG…HFAQRKRKYS (189 aa)) enclose the Protein kinase domain. Residues 33–41 (IGKGRSAYV) and Lys-54 each bind ATP. Asp-135 functions as the Proton acceptor in the catalytic mechanism.

Belongs to the protein kinase superfamily. Ser/Thr protein kinase family.

It carries out the reaction L-seryl-[protein] + ATP = O-phospho-L-seryl-[protein] + ADP + H(+). It catalyses the reaction L-threonyl-[protein] + ATP = O-phospho-L-threonyl-[protein] + ADP + H(+). In Bacillus subtilis (strain 168), this protein is Putative serine/threonine-protein kinase YrzF (yrzF).